A 574-amino-acid polypeptide reads, in one-letter code: DNA mismatch repair protein MutL (574 aa).

It belongs to the DNA mismatch repair MutL/HexB family.

In terms of biological role, this protein is involved in the repair of mismatches in DNA. It is required for dam-dependent methyl-directed DNA mismatch repair. May act as a 'molecular matchmaker', a protein that promotes the formation of a stable complex between two or more DNA-binding proteins in an ATP-dependent manner without itself being part of a final effector complex. This is DNA mismatch repair protein MutL from Coxiella burnetii (strain RSA 331 / Henzerling II).